Consider the following 506-residue polypeptide: Sucrose transport protein SUT3 (506 aa).

Topologically, residues 1–20 are cytoplasmic; sequence MAVDMELDGGGDGKGKAPPQ. The chain crosses the membrane as a helical span at residues 21 to 41; it reads ISLSGLFLACMVAGGVQYGWA. The Extracellular segment spans residues 42-54; it reads LQLSLLTPYIQTL. Residues 55–75 form a helical membrane-spanning segment; sequence GIPHALTSVMWLCGPIAGLIV. The Cytoplasmic segment spans residues 76–94; the sequence is QPCVGLYSDKCTSSLGRRR. A helical transmembrane segment spans residues 95 to 115; that stretch reads PFILTGCIIICISVIVIGFSS. Residues 116–135 lie on the Extracellular side of the membrane; it reads DIGYALGDATEDCKVYRGPR. A helical transmembrane segment spans residues 136–156; that stretch reads YHAAAAFILGFWLLDFSNNTV. Residues 157–171 are Cytoplasmic-facing; it reads QGPARALMADLSGRH. A helical transmembrane segment spans residues 172–192; sequence GPSAANAIFCSWMALGNILGY. At 193–220 the chain is on the extracellular side; that stretch reads SSGSTNDWHKWFPFLMTRACCEACANLK. A helical membrane pass occupies residues 221–241; it reads AAFLVAVVFLGLSTAVTMVFA. The Cytoplasmic portion of the chain corresponds to 242-275; that stretch reads REVALDPVAAAKRNEGEASGPLAVFKGMKNLPVG. A helical membrane pass occupies residues 276–296; the sequence is MPSVLIVTGLTWLSWFPFILF. At 297 to 327 the chain is on the extracellular side; the sequence is DTDWMGREIYHGRPDGSPAEVTAFQEGVRQG. Residues 328 to 348 traverse the membrane as a helical segment; that stretch reads AFGLLLNSIVLGISSFLIEPM. At 349–355 the chain is on the cytoplasmic side; it reads CRRLGAR. A helical membrane pass occupies residues 356–376; it reads AVWVMSSAVVCVAMAAVSVLS. The Extracellular segment spans residues 377–404; sequence AWSLGDFGGSVQDAARAPAEEGGVRASA. Residues 405-425 traverse the membrane as a helical segment; that stretch reads LALFVFLGLPFAVLCSVPFAV. The Cytoplasmic segment spans residues 426 to 441; it reads TAQLTASRGGGQGLCT. The chain crosses the membrane as a helical span at residues 442–462; it reads GVLNISIVVPQMAIALGAGPW. Residues 463–470 are Extracellular-facing; it reads DELFGEGN. A helical membrane pass occupies residues 471–491; sequence IPAFAMASVFAAAAAAAGVVL. At 492 to 506 the chain is on the cytoplasmic side; the sequence is LPKVSVRSVSMAGGH.

Belongs to the glycoside-pentoside-hexuronide (GPH) cation symporter transporter (TC 2.A.2.4) family. Homodimer.

The protein resides in the cell membrane. The protein operates within glycan biosynthesis; sucrose metabolism. In terms of biological role, responsible for the transport of sucrose into the cell, with the concomitant uptake of protons (symport system). May also transport other glucosides. The chain is Sucrose transport protein SUT3 (SUT3) from Oryza sativa subsp. indica (Rice).